Consider the following 320-residue polypeptide: Ferrochelatase (320 aa).

Residues histidine 194 and glutamate 275 each contribute to the Fe cation site.

This sequence belongs to the ferrochelatase family. Monomer.

It is found in the cytoplasm. It catalyses the reaction heme b + 2 H(+) = protoporphyrin IX + Fe(2+). Its pathway is porphyrin-containing compound metabolism; protoheme biosynthesis; protoheme from protoporphyrin-IX: step 1/1. Its function is as follows. Catalyzes the ferrous insertion into protoporphyrin IX. This chain is Ferrochelatase, found in Shigella boydii serotype 18 (strain CDC 3083-94 / BS512).